Reading from the N-terminus, the 187-residue chain is Probable carboxylesterase Culp7 (187 aa).

The cysteines at positions 15 and 69 are disulfide-linked. The active-site Nucleophile is the serine 80. The cysteines at positions 151 and 158 are disulfide-linked. Residue aspartate 155 is part of the active site. Histidine 167 acts as the Proton donor/acceptor in catalysis.

Belongs to the cutinase family.

The protein resides in the cytoplasm. It is found in the cell membrane. Its subcellular location is the secreted. It localises to the cell wall. In terms of biological role, may have a role in cell wall processes. Does not exhibit cutinase activity. The protein is Probable carboxylesterase Culp7 of Mycobacterium tuberculosis (strain ATCC 25618 / H37Rv).